Here is a 658-residue protein sequence, read N- to C-terminus: Transport protein particle subunit trs85-1 (658 aa).

The protein belongs to the TRS85 family. In terms of assembly, part of the multisubunit TRAPP (transport protein particle) complexes I and II.

The protein localises to the golgi apparatus. The protein resides in the cis-Golgi network. In terms of biological role, component of the TRAPP I and TRAPP II complexes. TRAPP I plays a key role in the late stages of endoplasmic reticulum to Golgi traffic. TRAPP II seems to play a role in intra-Golgi transport. Has a role late in meiosis following DNA replication. This is Transport protein particle subunit trs85-1 (trs85-1) from Schizosaccharomyces pombe (strain 972 / ATCC 24843) (Fission yeast).